The sequence spans 362 residues: Endolytic peptidoglycan transglycosylase RlpA (362 aa).

An N-terminal signal peptide occupies residues Met-1–Ala-17. Cys-18 carries the N-palmitoyl cysteine lipid modification. Cys-18 is lipidated: S-diacylglycerol cysteine. The tract at residues Pro-198–Ala-276 is disordered. Residues Pro-262 to Ala-276 show a composition bias toward low complexity. An SPOR domain is found at Gln-285–Ala-361.

The protein belongs to the RlpA family.

The protein localises to the cell membrane. Functionally, lytic transglycosylase with a strong preference for naked glycan strands that lack stem peptides. The protein is Endolytic peptidoglycan transglycosylase RlpA of Escherichia coli (strain K12).